Here is an 865-residue protein sequence, read N- to C-terminus: Protein translocase subunit SecA (865 aa).

ATP is bound by residues Gln-85, 103 to 107, and Asp-505; that span reads GEGKT. Positions 847, 849, 858, and 859 each coordinate Zn(2+).

It belongs to the SecA family. Monomer and homodimer. Part of the essential Sec protein translocation apparatus which comprises SecA, SecYEG and auxiliary proteins SecDF. Other proteins may also be involved. The cofactor is Zn(2+).

The protein localises to the cell membrane. The protein resides in the cytoplasm. The catalysed reaction is ATP + H2O + cellular proteinSide 1 = ADP + phosphate + cellular proteinSide 2.. Its function is as follows. Part of the Sec protein translocase complex. Interacts with the SecYEG preprotein conducting channel. Has a central role in coupling the hydrolysis of ATP to the transfer of proteins into and across the cell membrane, serving as an ATP-driven molecular motor driving the stepwise translocation of polypeptide chains across the membrane. The chain is Protein translocase subunit SecA from Lactococcus lactis subsp. cremoris (strain SK11).